A 236-amino-acid polypeptide reads, in one-letter code: Phosphoribosylaminoimidazole-succinocarboxamide synthase (236 aa).

Belongs to the SAICAR synthetase family.

The enzyme catalyses 5-amino-1-(5-phospho-D-ribosyl)imidazole-4-carboxylate + L-aspartate + ATP = (2S)-2-[5-amino-1-(5-phospho-beta-D-ribosyl)imidazole-4-carboxamido]succinate + ADP + phosphate + 2 H(+). It participates in purine metabolism; IMP biosynthesis via de novo pathway; 5-amino-1-(5-phospho-D-ribosyl)imidazole-4-carboxamide from 5-amino-1-(5-phospho-D-ribosyl)imidazole-4-carboxylate: step 1/2. This Campylobacter curvus (strain 525.92) protein is Phosphoribosylaminoimidazole-succinocarboxamide synthase.